Here is a 596-residue protein sequence, read N- to C-terminus: Aspartate--tRNA(Asp/Asn) ligase (596 aa).

Glu175 contacts L-aspartate. The tract at residues 199–202 (QQYK) is aspartate. Arg221 and His454 together coordinate L-aspartate. 221–223 (RDE) is a binding site for ATP. An ATP-binding site is contributed by Glu488. Arg495 lines the L-aspartate pocket. 540 to 543 (GVDR) contacts ATP.

The protein belongs to the class-II aminoacyl-tRNA synthetase family. Type 1 subfamily. In terms of assembly, homodimer.

Its subcellular location is the cytoplasm. The catalysed reaction is tRNA(Asx) + L-aspartate + ATP = L-aspartyl-tRNA(Asx) + AMP + diphosphate. In terms of biological role, aspartyl-tRNA synthetase with relaxed tRNA specificity since it is able to aspartylate not only its cognate tRNA(Asp) but also tRNA(Asn). Reaction proceeds in two steps: L-aspartate is first activated by ATP to form Asp-AMP and then transferred to the acceptor end of tRNA(Asp/Asn). This is Aspartate--tRNA(Asp/Asn) ligase from Bartonella henselae (strain ATCC 49882 / DSM 28221 / CCUG 30454 / Houston 1) (Rochalimaea henselae).